The chain runs to 376 residues: Succinyl-diaminopimelate desuccinylase 1 (376 aa).

His67 contacts Zn(2+). Asp69 is a catalytic residue. Asp100 serves as a coordination point for Zn(2+). Residue Glu134 is the Proton acceptor of the active site. Residues Glu135, Glu163, and His349 each coordinate Zn(2+).

The protein belongs to the peptidase M20A family. DapE subfamily. As to quaternary structure, homodimer. Zn(2+) is required as a cofactor. It depends on Co(2+) as a cofactor.

The catalysed reaction is N-succinyl-(2S,6S)-2,6-diaminopimelate + H2O = (2S,6S)-2,6-diaminopimelate + succinate. It participates in amino-acid biosynthesis; L-lysine biosynthesis via DAP pathway; LL-2,6-diaminopimelate from (S)-tetrahydrodipicolinate (succinylase route): step 3/3. Its function is as follows. Catalyzes the hydrolysis of N-succinyl-L,L-diaminopimelic acid (SDAP), forming succinate and LL-2,6-diaminopimelate (DAP), an intermediate involved in the bacterial biosynthesis of lysine and meso-diaminopimelic acid, an essential component of bacterial cell walls. The sequence is that of Succinyl-diaminopimelate desuccinylase 1 from Shewanella loihica (strain ATCC BAA-1088 / PV-4).